Reading from the N-terminus, the 165-residue chain is Ribosome maturation factor RimM (165 aa).

Residues 94–165 (EDEFYIADLT…YVILNYQREA (72 aa)) form the PRC barrel domain.

The protein belongs to the RimM family. As to quaternary structure, binds ribosomal protein uS19.

It is found in the cytoplasm. An accessory protein needed during the final step in the assembly of 30S ribosomal subunit, possibly for assembly of the head region. Essential for efficient processing of 16S rRNA. May be needed both before and after RbfA during the maturation of 16S rRNA. It has affinity for free ribosomal 30S subunits but not for 70S ribosomes. The sequence is that of Ribosome maturation factor RimM from Rickettsia rickettsii (strain Iowa).